The sequence spans 149 residues: Myosin light chain 1 (149 aa).

EF-hand domains are found at residues 2 to 37, 81 to 116, and 117 to 149; these read SATRANKDIFTLFDKKGQGAIAKDSLGDYLRAIGYN, AKTEDFVKAFQVFDKESTGKVSVGDLRYMLTGLGEK, and LTDAEVDELLKGVEVDSNGEIDYKKFIEDVLRQ. 5 residues coordinate Ca(2+): Asp-15, Asp-94, Thr-98, Lys-100, and Asp-105. Lys-116 participates in a covalent cross-link: Glycyl lysine isopeptide (Lys-Gly) (interchain with G-Cter in ubiquitin). Ca(2+) contacts are provided by Asp-123, Lys-127, and Asp-132.

Interacts with MYO1, MYO2 and IQG1 by binding to their IQ domains. Interacts with SEC4.

It localises to the bud neck. The protein resides in the bud tip. Its function is as follows. Essential light chain for the class II conventional myosin MYO1. Also acts as light chain for the class V unconventional myosin MYO2 and for IQG1. Involved in the assembly of the contractile actomyosin ring at the bud neck during cytokinesis by recruiting IQG1 to the bud neck. Also required for chitin and MYO2-dependent secretory vesicle deposition to the center of the bud neck for septum formation. May stabilize MYO2 by binding to its IQ domains. Its major function is probably not to regulate MYO1 activity, but rather to coordinate actin ring formation and targeted membrane deposition during cytokinesis via its interactions with MYO1, IQG1 and MYO2. The chain is Myosin light chain 1 (MLC1) from Saccharomyces cerevisiae (strain ATCC 204508 / S288c) (Baker's yeast).